We begin with the raw amino-acid sequence, 26 residues long: MSPQTETKAKVGFQAGVKDYKLTYYT.

A propeptide spanning residues 1-2 (MS) is cleaved from the precursor. N-acetylproline is present on Pro-3.

This sequence belongs to the RuBisCO large chain family. Type I subfamily. As to quaternary structure, heterohexadecamer of 8 large chains and 8 small chains.

The protein resides in the plastid. The protein localises to the chloroplast. The enzyme catalyses 2 (2R)-3-phosphoglycerate + 2 H(+) = D-ribulose 1,5-bisphosphate + CO2 + H2O. It carries out the reaction D-ribulose 1,5-bisphosphate + O2 = 2-phosphoglycolate + (2R)-3-phosphoglycerate + 2 H(+). RuBisCO catalyzes two reactions: the carboxylation of D-ribulose 1,5-bisphosphate, the primary event in carbon dioxide fixation, as well as the oxidative fragmentation of the pentose substrate in the photorespiration process. Both reactions occur simultaneously and in competition at the same active site. This chain is Ribulose bisphosphate carboxylase large chain (rbcL), found in Vicia faba (Broad bean).